Consider the following 151-residue polypeptide: Large ribosomal subunit protein bL9 (151 aa).

It belongs to the bacterial ribosomal protein bL9 family.

In terms of biological role, binds to the 23S rRNA. The sequence is that of Large ribosomal subunit protein bL9 from Chlorobium limicola (strain DSM 245 / NBRC 103803 / 6330).